The chain runs to 178 residues: Disulfide bond formation protein B (178 aa).

Residues 1–14 (MLSFFKTLSTKRSA) are Cytoplasmic-facing. A helical transmembrane segment spans residues 15–31 (WFLLFSSALLLEAIALY). Residues 32 to 49 (FQHGMGLAPCVMCIYERV) lie on the Periplasmic side of the membrane. A disulfide bridge connects residues Cys-41 and Cys-44. Residues 50–65 (AILGIAFSGLLGLLYP) traverse the membrane as a helical segment. Topologically, residues 66–72 (SSMLLRL) are cytoplasmic. Residues 73-90 (VALLIGLSSAIKGLMISI) form a helical membrane-spanning segment. Residues 91-145 (THLDLQLYPAPWKQCSAVAEFPETLPLDQWFPALFLPSGSCSEVTWQFLGFSMVQ) are Periplasmic-facing. Cysteines 105 and 131 form a disulfide. A helical membrane pass occupies residues 146–164 (WIVVIFALYTLLLALIFIS). Residues 165 to 177 (QVKRLKPKQRRLF) are Cytoplasmic-facing.

This sequence belongs to the DsbB family.

The protein resides in the cell inner membrane. Required for disulfide bond formation in some periplasmic proteins. Acts by oxidizing the DsbA protein. The chain is Disulfide bond formation protein B from Pasteurella multocida (strain Pm70).